Reading from the N-terminus, the 131-residue chain is Glycine cleavage system H protein (131 aa).

Residues 24 to 106 (RAIVGISDHA…YGEGWIMVIE (83 aa)) enclose the Lipoyl-binding domain. N6-lipoyllysine is present on lysine 65.

Belongs to the GcvH family. The glycine cleavage system is composed of four proteins: P, T, L and H. It depends on (R)-lipoate as a cofactor.

Its function is as follows. The glycine cleavage system catalyzes the degradation of glycine. The H protein shuttles the methylamine group of glycine from the P protein to the T protein. The polypeptide is Glycine cleavage system H protein (Xylella fastidiosa (strain 9a5c)).